The primary structure comprises 539 residues: Probable quinate permease (539 aa).

Residues 1 to 22 (MSILSMVEDRPTPKEVYNWRIY) are Cytoplasmic-facing. Residues 23–43 (LLAAVASFTSCMIGYDSAFIG) form a helical membrane-spanning segment. At 44–74 (TTISLDSFKNEFHWDSMSTAKQNLVSANIVS) the chain is on the extracellular side. A helical membrane pass occupies residues 75–95 (CYQAGAFFGAFFAYPIGHFWG). Over 96–97 (RK) the chain is Cytoplasmic. A helical membrane pass occupies residues 98–118 (WGLMLSALVFTLGAGLMLGAN). At 119-130 (GDRGLGLIYGGR) the chain is on the extracellular side. The chain crosses the membrane as a helical span at residues 131 to 151 (VLAGLGVGAGSNFTPIYISEL). At 152-159 (APPAIRGR) the chain is on the cytoplasmic side. A helical membrane pass occupies residues 160-180 (LVGVYELGWQVGGLVGFWINY). The Extracellular portion of the chain corresponds to 181–193 (GVEQTMAPSHKQW). A helical transmembrane segment spans residues 194–214 (LIPFAVQLIPAGLLIIGILFV). Residues 215-285 (KESPRWLFLR…AWTNKRILYR (71 aa)) lie on the Cytoplasmic side of the membrane. A helical membrane pass occupies residues 286 to 306 (LFLGSMLFFWQNGSGINAINY). The Extracellular portion of the chain corresponds to 307-325 (YSPTVFKSIGLKGNSSSLL). Residues 326–346 (TTGIFGVVKTVVTIVWLLYLI) form a helical membrane-spanning segment. Over 347–352 (DHVGRR) the chain is Cytoplasmic. A helical transmembrane segment spans residues 353–373 (LLLLIGAAGGSICMWIVGAYI). Residues 374 to 387 (KVVDPTHNQSDHLN) lie on the Extracellular side of the membrane. The chain crosses the membrane as a helical span at residues 388–408 (GGGVAAIFFFYLWTAFYTPSW). Residues 409–456 (NGTPWVINSEMFDPNIRSLAQACAAGSNWLWNFLISRFTPQMFAKMDY) lie on the Cytoplasmic side of the membrane. Residues 457–477 (GVYFFFASLMLLSIPFVFFLV) traverse the membrane as a helical segment. The Extracellular segment spans residues 478–539 (PETKGIPLEN…EQVEDTDRKE (62 aa)).

Belongs to the major facilitator superfamily. Sugar transporter (TC 2.A.1.1) family. Interacts with creB. In terms of processing, ubiquitinated. Deubiquitinated by creB, probably to control its activity or amount.

It localises to the cell membrane. Integral membrane transporter that imports quinic acid to be catabolized as a carbon source. The protein is Probable quinate permease (qutD) of Aspergillus niger (strain ATCC MYA-4892 / CBS 513.88 / FGSC A1513).